We begin with the raw amino-acid sequence, 347 residues long: 5-deoxyribose 1-phosphate isomerase (347 aa).

Substrate-binding positions include 48 to 50, Arg-91, and Gln-198; that span reads RGA. Asp-239 functions as the Proton donor in the catalytic mechanism. 249–250 serves as a coordination point for substrate; sequence NK.

This sequence belongs to the EIF-2B alpha/beta/delta subunits family. DrdI subfamily.

It catalyses the reaction 5-deoxy-alpha-D-ribose 1-phosphate = 5-deoxy-D-ribulose 1-phosphate. It functions in the pathway carbohydrate degradation. Functionally, catalyzes the isomerization of 5-deoxy-alpha-D-ribose 1-phosphate to 5-deoxy-D-ribulose 1-phosphate, as part of a 5-deoxyribose salvage pathway that recycles this toxic radical SAM enzyme by-product to mainstream metabolites. In Bacillus cereus (strain ATCC 14579 / DSM 31 / CCUG 7414 / JCM 2152 / NBRC 15305 / NCIMB 9373 / NCTC 2599 / NRRL B-3711), this protein is 5-deoxyribose 1-phosphate isomerase.